The chain runs to 396 residues: MIISAASDYRAAAQRILPPFLFHYIDGGAYAEYTLRRNVEDLSQVALRQRVLKNMSDLSLETTLFNEKLSMPVALAPVGLCGMYARRGEVQAAGAADAHGIPFTLSTVSVCPIEEVAPTIKRPMWFQLYVLRDRGFMRNALERAKAAGCSTLVFTVDMPTPGARYRDAHSGMSGPNAAMRRYWQAVTHPQWAWDVGLNGRPHDLGNISAYLGKPTGLEDYIGWLANNFDPSISWKDLEWIRDFWDGPMVIKGILDPEDARDAVRFGADGIVVSNHGGRQLDGVLSSARALPAIADAVKGDIAILADSGIRNGLDVVRMIALGADTVLLGRAYLYALATAGKAGVANLLNLIEKEMKVAMTLTGAKSISEISQDSLVQELDKALPAALAPLAKGNAA.

The 380-residue stretch at 1 to 380 (MIISAASDYR…SQDSLVQELD (380 aa)) folds into the FMN hydroxy acid dehydrogenase domain. Y24 is a substrate binding site. The FMN site is built by S106 and Q127. Substrate is bound at residue Y129. T155 lines the FMN pocket. Position 164 (R164) interacts with substrate. FMN is bound at residue K251. The active-site Proton acceptor is H275. Position 278 (R278) interacts with substrate. 306-330 (DSGIRNGLDVVRMIALGADTVLLGR) is an FMN binding site.

The protein belongs to the FMN-dependent alpha-hydroxy acid dehydrogenase family. It depends on FMN as a cofactor.

It is found in the cell inner membrane. The enzyme catalyses (S)-lactate + A = pyruvate + AH2. In terms of biological role, catalyzes the conversion of L-lactate to pyruvate. Is coupled to the respiratory chain. The protein is L-lactate dehydrogenase of Escherichia fergusonii (strain ATCC 35469 / DSM 13698 / CCUG 18766 / IAM 14443 / JCM 21226 / LMG 7866 / NBRC 102419 / NCTC 12128 / CDC 0568-73).